Consider the following 270-residue polypeptide: Regulatory protein RecX (270 aa).

This sequence belongs to the RecX family.

It is found in the cytoplasm. Functionally, modulates RecA activity. The chain is Regulatory protein RecX from Bacillus anthracis (strain A0248).